Consider the following 238-residue polypeptide: Ion-translocating oxidoreductase complex subunit E (238 aa).

The next 6 helical transmembrane spans lie at A20–A40, L41–I61, P72–F92, E95–G115, A130–V150, and N185–A205.

The protein belongs to the NqrDE/RnfAE family. As to quaternary structure, the complex is composed of six subunits: RnfA, RnfB, RnfC, RnfD, RnfE and RnfG.

The protein resides in the cell inner membrane. Functionally, part of a membrane-bound complex that couples electron transfer with translocation of ions across the membrane. The polypeptide is Ion-translocating oxidoreductase complex subunit E (Cellvibrio japonicus (strain Ueda107) (Pseudomonas fluorescens subsp. cellulosa)).